Reading from the N-terminus, the 535-residue chain is Ribonuclease Y (535 aa).

The helical transmembrane segment at 30 to 50 threads the bilayer; the sequence is IWALPALVIGLAIGAGIGILI. Residues 225–285 form the KH domain; the sequence is TVSTVALPSE…VRREVARLAL (61 aa). An HD domain is found at 351-444; the sequence is VLQHSLECAL…VQAVDAISGG (94 aa).

Belongs to the RNase Y family.

It localises to the cell membrane. Its function is as follows. Endoribonuclease that initiates mRNA decay. The protein is Ribonuclease Y of Roseiflexus sp. (strain RS-1).